The following is a 367-amino-acid chain: Peptide chain release factor 2 (367 aa).

Q249 bears the N5-methylglutamine mark.

It belongs to the prokaryotic/mitochondrial release factor family. Post-translationally, methylated by PrmC. Methylation increases the termination efficiency of RF2.

Its subcellular location is the cytoplasm. Functionally, peptide chain release factor 2 directs the termination of translation in response to the peptide chain termination codons UGA and UAA. The polypeptide is Peptide chain release factor 2 (Pseudothermotoga lettingae (strain ATCC BAA-301 / DSM 14385 / NBRC 107922 / TMO) (Thermotoga lettingae)).